The following is a 360-amino-acid chain: Type 2 DNA topoisomerase 6 subunit A (360 aa).

In terms of domain architecture, Topo IIA-type catalytic spans 3 to 140 (EIERRCLRAL…FHIRPEEDGA (138 aa)). The active-site O-(5'-phospho-DNA)-tyrosine intermediate is tyrosine 97. Mg(2+)-binding residues include glutamate 193 and aspartate 245.

It belongs to the TOP6A family. As to quaternary structure, homodimer. Heterotetramer of two Top6A and two Top6B chains. Mg(2+) is required as a cofactor.

The catalysed reaction is ATP-dependent breakage, passage and rejoining of double-stranded DNA.. Its function is as follows. Relaxes both positive and negative superturns and exhibits a strong decatenase activity. The sequence is that of Type 2 DNA topoisomerase 6 subunit A from Archaeoglobus fulgidus (strain ATCC 49558 / DSM 4304 / JCM 9628 / NBRC 100126 / VC-16).